The chain runs to 253 residues: Small ribosomal subunit protein uS2 (253 aa).

It belongs to the universal ribosomal protein uS2 family.

This chain is Small ribosomal subunit protein uS2, found in Hahella chejuensis (strain KCTC 2396).